We begin with the raw amino-acid sequence, 1364 residues long: DNA-directed RNA polymerase subunit beta' (1364 aa).

The segment at 1–42 is disordered; the sequence is MTSSSSKSNKSRKSSKAAKDTTPVHESASRPLSKTPPPFRNH. Zn(2+)-binding residues include Cys-250, Cys-317, Cys-324, and Cys-327.

It belongs to the RNA polymerase beta' chain family. RpoC2 subfamily. In terms of assembly, in cyanobacteria the RNAP catalytic core is composed of 2 alpha, 1 beta, 1 beta', 1 gamma and 1 omega subunit. When a sigma factor is associated with the core the holoenzyme is formed, which can initiate transcription. Zn(2+) serves as cofactor.

It catalyses the reaction RNA(n) + a ribonucleoside 5'-triphosphate = RNA(n+1) + diphosphate. In terms of biological role, DNA-dependent RNA polymerase catalyzes the transcription of DNA into RNA using the four ribonucleoside triphosphates as substrates. The sequence is that of DNA-directed RNA polymerase subunit beta' from Parasynechococcus marenigrum (strain WH8102).